We begin with the raw amino-acid sequence, 662 residues long: Acetyl-coenzyme A synthetase (662 aa).

Residues 197-200 (RKGK) and Thr317 contribute to the CoA site. Residues 393-395 (GEP), 417-422 (DTWWQT), Asp510, and Arg525 contribute to the ATP site. Residue Ser533 participates in CoA binding. Arg536 contributes to the ATP binding site. Mg(2+) is bound by residues His549 and Val552. Lys623 is subject to N6-acetyllysine.

This sequence belongs to the ATP-dependent AMP-binding enzyme family. Mg(2+) serves as cofactor. In terms of processing, acetylated. Deacetylation by the SIR2-homolog deacetylase activates the enzyme.

The enzyme catalyses acetate + ATP + CoA = acetyl-CoA + AMP + diphosphate. In terms of biological role, catalyzes the conversion of acetate into acetyl-CoA (AcCoA), an essential intermediate at the junction of anabolic and catabolic pathways. AcsA undergoes a two-step reaction. In the first half reaction, AcsA combines acetate with ATP to form acetyl-adenylate (AcAMP) intermediate. In the second half reaction, it can then transfer the acetyl group from AcAMP to the sulfhydryl group of CoA, forming the product AcCoA. The sequence is that of Acetyl-coenzyme A synthetase from Helicobacter pylori (strain HPAG1).